Consider the following 381-residue polypeptide: 2-epi-5-epi-valiolone synthase (381 aa).

Residues D50, E81–K84, G114–D118, T138–S139, K151, K160, and F178–T181 contribute to the NAD(+) site. K151 is an active-site residue. 3 residues coordinate a divalent metal cation: E193, H264, and H280.

It belongs to the sugar phosphate cyclases superfamily. EEVS family. NAD(+) serves as cofactor. Requires Co(2+) as cofactor.

The enzyme catalyses D-sedoheptulose 7-phosphate = 2-epi-5-epi-valiolone + phosphate. The protein operates within antibiotic biosynthesis. Functionally, catalyzes the cyclization of D-sedoheptulose 7-phosphate to 2-epi-5-epi-valiolone. Involved in cetoniacytone A biosynthesis. The chain is 2-epi-5-epi-valiolone synthase from Actinomyces sp.